Reading from the N-terminus, the 357-residue chain is Histidinol-phosphate aminotransferase (357 aa).

Position 222 is an N6-(pyridoxal phosphate)lysine (K222).

Belongs to the class-II pyridoxal-phosphate-dependent aminotransferase family. Histidinol-phosphate aminotransferase subfamily. Homodimer. Pyridoxal 5'-phosphate serves as cofactor.

It catalyses the reaction L-histidinol phosphate + 2-oxoglutarate = 3-(imidazol-4-yl)-2-oxopropyl phosphate + L-glutamate. It participates in amino-acid biosynthesis; L-histidine biosynthesis; L-histidine from 5-phospho-alpha-D-ribose 1-diphosphate: step 7/9. The protein is Histidinol-phosphate aminotransferase of Leuconostoc mesenteroides subsp. mesenteroides (strain ATCC 8293 / DSM 20343 / BCRC 11652 / CCM 1803 / JCM 6124 / NCDO 523 / NBRC 100496 / NCIMB 8023 / NCTC 12954 / NRRL B-1118 / 37Y).